A 316-amino-acid chain; its full sequence is Retinol dehydrogenase 12 (316 aa).

46–52 (GANTGIG) is an NADP(+) binding site. Serine 175 is a binding site for substrate. Catalysis depends on tyrosine 200, which acts as the Proton acceptor.

This sequence belongs to the short-chain dehydrogenases/reductases (SDR) family. In terms of tissue distribution, expressed in the inner segments of the photoreceptor in retina.

It carries out the reaction all-trans-retinol + NADP(+) = all-trans-retinal + NADPH + H(+). The catalysed reaction is 11-cis-retinol + NADP(+) = 11-cis-retinal + NADPH + H(+). The enzyme catalyses 9-cis-retinol + NADP(+) = 9-cis-retinal + NADPH + H(+). It catalyses the reaction a 4-hydroxynonen-1-ol + NADP(+) = a 4-hydroxynonenal + NADPH + H(+). It carries out the reaction (E)-non-2-en-1-ol + NADP(+) = (E)-non-2-enal + NADPH + H(+). The catalysed reaction is (Z)-non-6-en-1-ol + NADP(+) = (Z)-non-6-enal + NADPH + H(+). The enzyme catalyses nonan-1-ol + NADP(+) = nonanal + NADPH + H(+). Its pathway is cofactor metabolism; retinol metabolism. Retinoids dehydrogenase/reductase with a clear preference for NADP. Displays high activity towards 9-cis, 11-cis and all-trans-retinal. Shows very weak activity toward 13-cis-retinol. Also exhibits activity, albeit with lower affinity than for retinaldehydes, towards lipid peroxidation products (C9 aldehydes) such as 4-hydroxynonenal and trans-2-nonenal. Plays an important function in photoreceptor cells to detoxify 4-hydroxynonenal and potentially other toxic aldehyde products resulting from lipid peroxidation. Has no dehydrogenase activity towards steroids. The chain is Retinol dehydrogenase 12 (Rdh12) from Mus musculus (Mouse).